The following is a 119-amino-acid chain: Large ribosomal subunit protein bL20 (119 aa).

Belongs to the bacterial ribosomal protein bL20 family.

In terms of biological role, binds directly to 23S ribosomal RNA and is necessary for the in vitro assembly process of the 50S ribosomal subunit. It is not involved in the protein synthesizing functions of that subunit. The sequence is that of Large ribosomal subunit protein bL20 from Afipia carboxidovorans (strain ATCC 49405 / DSM 1227 / KCTC 32145 / OM5) (Oligotropha carboxidovorans).